We begin with the raw amino-acid sequence, 23 residues long: U1-ctenitoxin-Co1a (23 aa).

Cys10 and Cys20 are disulfide-bonded.

Expressed by the venom gland.

It is found in the secreted. In terms of biological role, insecticidal neurotoxin that reversibly inhibits the N-methyl-D-aspartate (NMDA)-subtype of ionotropic glutamate receptor (GRIN) and inhibits inactivation of insect sodium channels (Nav). In vivo, is highly toxic to insects. The polypeptide is U1-ctenitoxin-Co1a (Ctenus ornatus (Brazilian spider)).